Consider the following 427-residue polypeptide: Homogentisate 1,2-dioxygenase (427 aa).

The active-site Proton acceptor is the histidine 285. Fe cation-binding residues include histidine 328 and glutamate 334. Homogentisate-binding residues include tyrosine 343 and histidine 364. Residue histidine 364 coordinates Fe cation.

This sequence belongs to the homogentisate dioxygenase family. In terms of assembly, hexamer; dimer of trimers. It depends on Fe cation as a cofactor.

It catalyses the reaction homogentisate + O2 = 4-maleylacetoacetate + H(+). It participates in amino-acid degradation; L-phenylalanine degradation; acetoacetate and fumarate from L-phenylalanine: step 4/6. Involved in the catabolism of homogentisate (2,5-dihydroxyphenylacetate or 2,5-OH-PhAc), a central intermediate in the degradation of phenylalanine and tyrosine. Catalyzes the oxidative ring cleavage of the aromatic ring of homogentisate to yield maleylacetoacetate. The polypeptide is Homogentisate 1,2-dioxygenase (Caulobacter sp. (strain K31)).